A 236-amino-acid polypeptide reads, in one-letter code: 2,3,4,5-tetrahydropyridine-2,6-dicarboxylate N-acetyltransferase (236 aa).

It belongs to the transferase hexapeptide repeat family. DapH subfamily.

The catalysed reaction is (S)-2,3,4,5-tetrahydrodipicolinate + acetyl-CoA + H2O = L-2-acetamido-6-oxoheptanedioate + CoA. The protein operates within amino-acid biosynthesis; L-lysine biosynthesis via DAP pathway; LL-2,6-diaminopimelate from (S)-tetrahydrodipicolinate (acetylase route): step 1/3. In terms of biological role, catalyzes the transfer of an acetyl group from acetyl-CoA to tetrahydrodipicolinate. The sequence is that of 2,3,4,5-tetrahydropyridine-2,6-dicarboxylate N-acetyltransferase from Clostridium botulinum (strain Loch Maree / Type A3).